We begin with the raw amino-acid sequence, 732 residues long: Polyribonucleotide nucleotidyltransferase (732 aa).

D502 and D508 together coordinate Mg(2+). One can recognise a KH domain in the interval 569-628 (PRLTSIQIPVDAIGMVIGKGGETIRSITEETGAEINIDDDGTVTIACSSPEGTKAAVETI). Positions 638–712 (GTIYMGKVRD…GKTKFALSIK (75 aa)) constitute an S1 motif domain.

It belongs to the polyribonucleotide nucleotidyltransferase family. Mg(2+) is required as a cofactor.

Its subcellular location is the cytoplasm. It catalyses the reaction RNA(n+1) + phosphate = RNA(n) + a ribonucleoside 5'-diphosphate. Its function is as follows. Involved in mRNA degradation. Catalyzes the phosphorolysis of single-stranded polyribonucleotides processively in the 3'- to 5'-direction. In Chlorobaculum parvum (strain DSM 263 / NCIMB 8327) (Chlorobium vibrioforme subsp. thiosulfatophilum), this protein is Polyribonucleotide nucleotidyltransferase.